Consider the following 114-residue polypeptide: Large ribosomal subunit protein uL22 (114 aa).

It belongs to the universal ribosomal protein uL22 family. Part of the 50S ribosomal subunit.

Its function is as follows. This protein binds specifically to 23S rRNA; its binding is stimulated by other ribosomal proteins, e.g. L4, L17, and L20. It is important during the early stages of 50S assembly. It makes multiple contacts with different domains of the 23S rRNA in the assembled 50S subunit and ribosome. Functionally, the globular domain of the protein is located near the polypeptide exit tunnel on the outside of the subunit, while an extended beta-hairpin is found that lines the wall of the exit tunnel in the center of the 70S ribosome. This chain is Large ribosomal subunit protein uL22, found in Aeromonas hydrophila subsp. hydrophila (strain ATCC 7966 / DSM 30187 / BCRC 13018 / CCUG 14551 / JCM 1027 / KCTC 2358 / NCIMB 9240 / NCTC 8049).